The sequence spans 418 residues: Nuclear hormone receptor 114 (418 aa).

The nuclear receptor DNA-binding region spans 12 to 87; sequence DHVCLVCQDF…VGMDRNALQQ (76 aa). 2 consecutive NR C4-type zinc fingers follow at residues 15–35 and 51–70; these read CLVC…CVGC and CQFE…CRYC. The segment at 89–130 is disordered; it reads RDPIGYTKRTRRPKKELKTTSDCSSDEGASTPPSVSPLQLSP. Positions 170-409 constitute an NR LBD domain; it reads PIRSLHEALC…AFARQLFFGD (240 aa). Residues 398–409 are AF-2; it reads FSAFARQLFFGD.

The protein belongs to the nuclear hormone receptor family. Expressed in germ and intestinal cells and at low levels in the hypodermis.

The protein localises to the nucleus. Its function is as follows. Probable transcription factor which may have a role in detoxifying dietary metabolites arising from bacterial tryptophan metabolism. Required for fertility and involved in proper postembryonic germline development, especially germline stem cell (GSC) proliferation. Required for activation of the methionine/S-adenosylmethionine (Met/SAM) cycle in response to low levels of SAM. The sequence is that of Nuclear hormone receptor 114 from Caenorhabditis elegans.